The chain runs to 352 residues: Histidinol-phosphate aminotransferase (352 aa).

An N6-(pyridoxal phosphate)lysine modification is found at Lys211.

This sequence belongs to the class-II pyridoxal-phosphate-dependent aminotransferase family. Histidinol-phosphate aminotransferase subfamily. In terms of assembly, homodimer. Pyridoxal 5'-phosphate is required as a cofactor.

It catalyses the reaction L-histidinol phosphate + 2-oxoglutarate = 3-(imidazol-4-yl)-2-oxopropyl phosphate + L-glutamate. It functions in the pathway amino-acid biosynthesis; L-histidine biosynthesis; L-histidine from 5-phospho-alpha-D-ribose 1-diphosphate: step 7/9. This chain is Histidinol-phosphate aminotransferase, found in Haemophilus influenzae (strain PittGG).